An 87-amino-acid polypeptide reads, in one-letter code: Selenoprotein W (87 aa).

Residues 10-13 (CGAU) constitute a cross-link (cysteinyl-selenocysteine (Cys-Sec); redox-active). Selenocysteine 13 is a non-standard amino acid (selenocysteine). Cysteine 37 bears the S-glutathionyl cysteine mark.

This sequence belongs to the SelWTH family. Selenoprotein W subfamily. Interacts with DPYSL2, PRDX1, YWHAB, YWHAG, HSP70 and HSP90.

The protein resides in the cytoplasm. Functionally, plays a role as a glutathione (GSH)-dependent antioxidant. May be involved in a redox-related process. May play a role in the myopathies of selenium deficiency. This chain is Selenoprotein W, found in Sus scrofa (Pig).